The sequence spans 121 residues: uncharacterized protein (121 aa).

2 disordered regions span residues 1–28 and 60–81; these read MGCA…QNGD and QENL…EIPG. Phosphoserine is present on residues S95 and S115.

This is an uncharacterized protein from Mus musculus (Mouse).